The primary structure comprises 746 residues: Alpha-galactosidase 2 (746 aa).

The first 26 residues, 1 to 26 (MLGAPSPRRLADVLAVTAGLVASVRA), serve as a signal peptide directing secretion. N-linked (GlcNAc...) asparagine glycans are attached at residues N43, N156, N180, N188, N360, N427, N446, and N495. The Nucleophile role is filled by D504. The active-site Proton donor is D566. An N-linked (GlcNAc...) asparagine glycan is attached at N714.

It belongs to the glycosyl hydrolase 27 family.

Its subcellular location is the secreted. The enzyme catalyses Hydrolysis of terminal, non-reducing alpha-D-galactose residues in alpha-D-galactosides, including galactose oligosaccharides, galactomannans and galactolipids.. Alpha-galactosidase involved in the degradation of simple oligosaccharides like melibiose, raffinose and stachyose, and of polymeric galacto(gluco)mannans. In Hypocrea jecorina (Trichoderma reesei), this protein is Alpha-galactosidase 2 (agl2).